A 333-amino-acid polypeptide reads, in one-letter code: Fructose-1,6-bisphosphatase class 1 (333 aa).

Mg(2+) contacts are provided by glutamate 89, aspartate 112, leucine 114, and aspartate 115. Substrate-binding positions include 115–118 (DGSS), asparagine 208, tyrosine 241, and lysine 271. Glutamate 277 serves as a coordination point for Mg(2+).

It belongs to the FBPase class 1 family. Homotetramer. Requires Mg(2+) as cofactor.

It is found in the cytoplasm. It carries out the reaction beta-D-fructose 1,6-bisphosphate + H2O = beta-D-fructose 6-phosphate + phosphate. The protein operates within carbohydrate biosynthesis; gluconeogenesis. The polypeptide is Fructose-1,6-bisphosphatase class 1 (Haemophilus influenzae (strain ATCC 51907 / DSM 11121 / KW20 / Rd)).